A 653-amino-acid chain; its full sequence is Acetyl-coenzyme A synthetase (653 aa).

CoA is bound by residues 196 to 199 (RGGK) and Thr-315. ATP contacts are provided by residues 391-393 (GEP), 415-420 (DTWWQT), Asp-506, and Arg-521. Ser-529 provides a ligand contact to CoA. Residue Arg-532 participates in ATP binding. Residues Val-543 and Val-548 each contribute to the Mg(2+) site. Lys-618 is modified (N6-acetyllysine).

Belongs to the ATP-dependent AMP-binding enzyme family. Requires Mg(2+) as cofactor. Acetylated. Deacetylation by the SIR2-homolog deacetylase activates the enzyme.

It catalyses the reaction acetate + ATP + CoA = acetyl-CoA + AMP + diphosphate. In terms of biological role, catalyzes the conversion of acetate into acetyl-CoA (AcCoA), an essential intermediate at the junction of anabolic and catabolic pathways. AcsA undergoes a two-step reaction. In the first half reaction, AcsA combines acetate with ATP to form acetyl-adenylate (AcAMP) intermediate. In the second half reaction, it can then transfer the acetyl group from AcAMP to the sulfhydryl group of CoA, forming the product AcCoA. This Laribacter hongkongensis (strain HLHK9) protein is Acetyl-coenzyme A synthetase.